Consider the following 427-residue polypeptide: Steroid C26-monooxygenase (427 aa).

Cys-360 lines the heme pocket.

It belongs to the cytochrome P450 family. The cofactor is heme.

The enzyme catalyses cholest-4-en-3-one + 6 reduced [2Fe-2S]-[ferredoxin] + 3 O2 + 5 H(+) = (25S)-3-oxocholest-4-en-26-oate + 6 oxidized [2Fe-2S]-[ferredoxin] + 4 H2O. The protein operates within steroid metabolism; cholesterol degradation. Involved in the utilization of cholesterol as the sole carbon and energy source by degrading the side chain. Primarily catalyzes the sequential oxidation of the terminal methyl of cholest-4-en-3-one into (25S)-26-hydroxycholest-4-en-3-one (alcohol), (25S)-26-oxocholest-4-en-3-one (aldehyde), to finally yield the carboxylic acid (25S)-3-oxocholest-4-en-26-oate. Also able to sequentially oxidize cholesterol itself, not only cholest-4-en-3-one. The protein is Steroid C26-monooxygenase of Mycolicibacterium smegmatis (strain ATCC 700084 / mc(2)155) (Mycobacterium smegmatis).